Consider the following 492-residue polypeptide: Probable cobyric acid synthase (492 aa).

A GATase cobBQ-type domain is found at 252 to 444 (PIEVNIVKFS…FHGILENFEF (193 aa)). The active-site Nucleophile is cysteine 330. Residue histidine 436 is part of the active site.

Belongs to the CobB/CobQ family. CobQ subfamily.

Its pathway is cofactor biosynthesis; adenosylcobalamin biosynthesis. In terms of biological role, catalyzes amidations at positions B, D, E, and G on adenosylcobyrinic A,C-diamide. NH(2) groups are provided by glutamine, and one molecule of ATP is hydrogenolyzed for each amidation. This chain is Probable cobyric acid synthase, found in Methanococcus maripaludis (strain C6 / ATCC BAA-1332).